The primary structure comprises 789 residues: Kin of IRRE-like protein 1 (789 aa).

The first 47 residues, 1–47 (MTLENRSTCLMTCQSSLLPKKPRFLSQKMWAPHLVVAYLIFVTLALA), serve as a signal peptide directing secretion. 3 N-linked (GlcNAc...) asparagine glycosylation sites follow: Asn-5, Asn-78, and Asn-172. Residues 48 to 531 (LPGTQTRFSQ…REVLPVGIIA (484 aa)) are Extracellular-facing. Ig-like C2-type domains are found at residues 49-147 (PGTQ…AKLT), 152-248 (PEDT…TSIE), 255-335 (PTVT…TLVN), 340-419 (PRIV…EVPL), and 424-520 (PPII…IQLE). An intrachain disulfide couples Cys-74 to Cys-132. Intrachain disulfides connect Cys-175/Cys-232 and Cys-276/Cys-319. A glycan (N-linked (GlcNAc...) asparagine) is linked at Asn-329. A disulfide bridge connects residues Cys-361 and Cys-403. The Cell attachment site signature appears at 437–439 (RGD). An intrachain disulfide couples Cys-445 to Cys-504. Residue Asn-503 is glycosylated (N-linked (GlcNAc...) asparagine). The helical transmembrane segment at 532–552 (GATIGAGILLVFSFAALVFFL) threads the bilayer. Residues 553–789 (YRRRKGSRKD…RFQQRMQTHV (237 aa)) lie on the Cytoplasmic side of the membrane. Phosphoserine is present on Ser-606. Residues Tyr-637 and Tyr-638 each carry the phosphotyrosine; by FYN modification. Phosphotyrosine is present on residues Tyr-654 and Tyr-657. A disordered region spans residues 687-713 (RAPASDYGTEPTPSGPSAPGGTDTTSQ). The span at 694-712 (GTEPTPSGPSAPGGTDTTS) shows a compositional bias: low complexity. Position 756 is a phosphotyrosine (Tyr-756).

Belongs to the immunoglobulin superfamily. In terms of assembly, interacts with TJP1/ZO-1 and with NPHS2/podocin (via the C-terminus). Interacts with NPHS1/nephrin (via the Ig-like domains); this interaction is dependent on KIRREL1 glycosylation. Homodimer (via the Ig-like domains). Interacts when tyrosine-phosphorylated with GRB2. Phosphorylation probably regulates the interaction with NPHS2. Phosphorylated at Tyr-637 and Tyr-638 by FYN, leading to GRB2 binding. Post-translationally, N-glycosylated.

It localises to the cell membrane. Functionally, required for proper function of the glomerular filtration barrier. It is involved in the maintenance of a stable podocyte architecture with interdigitating foot processes connected by specialized cell-cell junctions, known as the slit diaphragm. It is a signaling protein that needs the presence of TEC kinases to fully trans-activate the transcription factor AP-1. In Rattus norvegicus (Rat), this protein is Kin of IRRE-like protein 1 (Kirrel1).